A 316-amino-acid chain; its full sequence is Ribose-phosphate pyrophosphokinase (316 aa).

Residues 37 to 39 (DGE) and 96 to 97 (RQ) each bind ATP. His131 and Asp171 together coordinate Mg(2+). The active site involves Lys195. D-ribose 5-phosphate is bound by residues Arg197, Asp221, and 225-229 (DTGGT).

Belongs to the ribose-phosphate pyrophosphokinase family. Class I subfamily. Homohexamer. Mg(2+) is required as a cofactor.

Its subcellular location is the cytoplasm. The enzyme catalyses D-ribose 5-phosphate + ATP = 5-phospho-alpha-D-ribose 1-diphosphate + AMP + H(+). Its pathway is metabolic intermediate biosynthesis; 5-phospho-alpha-D-ribose 1-diphosphate biosynthesis; 5-phospho-alpha-D-ribose 1-diphosphate from D-ribose 5-phosphate (route I): step 1/1. Its function is as follows. Involved in the biosynthesis of the central metabolite phospho-alpha-D-ribosyl-1-pyrophosphate (PRPP) via the transfer of pyrophosphoryl group from ATP to 1-hydroxyl of ribose-5-phosphate (Rib-5-P). The polypeptide is Ribose-phosphate pyrophosphokinase (Haemophilus ducreyi (strain 35000HP / ATCC 700724)).